The sequence spans 585 residues: Mitochondrial sodium/calcium exchanger protein (585 aa).

The N-terminal stretch at 1 to 26 is a signal peptide; it reads MAGRWLDPLWAPGFLCVALILETASG. Topologically, residues 27 to 95 are extracellular; the sequence is AGDLSTKAHG…GIFCYFPPNL (69 aa). Residue asparagine 46 is glycosylated (N-linked (GlcNAc...) asparagine). Residues 96-116 traverse the membrane as a helical segment; that stretch reads LPLAITLYVFWLLYLFLILGV. The Cytoplasmic portion of the chain corresponds to 117–140; the sequence is TAAKFFCPNLSAISTSLKLSHNVA. The chain crosses the membrane as a helical span at residues 141–161; the sequence is GVTFLAFGNGAPDIFSALVAF. At 162–168 the chain is on the extracellular side; it reads SDPRTAG. A helical transmembrane segment spans residues 169-189; the sequence is LAIGALFGAGVLVTTVVAGGI. The Cytoplasmic portion of the chain corresponds to 190-205; it reads TILRPFMAASRPFLRD. Residues 206–226 traverse the membrane as a helical segment; that stretch reads ITFYMVAVFLTFTALYLGRIT. Residue leucine 227 is a topological domain, extracellular. The chain crosses the membrane as a helical span at residues 228-247; it reads VWALGYLGLYVFYVVTVIIC. At 248-325 the chain is on the cytoplasmic side; it reads TWVYQRQRSR…KWRTQSISCK (78 aa). Serine 258 carries the phosphoserine; by PKA modification. A helical transmembrane segment spans residues 326-346; sequence LLKVAKLPVEFLLLLTVPVVD. At 347-360 the chain is on the extracellular side; the sequence is PDKDDRNWKRPLNC. Residues 361-381 traverse the membrane as a helical segment; the sequence is LQLVISPLVLVLTLQSGVYGI. Topologically, residues 382–383 are cytoplasmic; the sequence is YE. The chain crosses the membrane as a helical span at residues 384–404; the sequence is IGGLLPVWAVVVIVGTALASV. The Extracellular segment spans residues 405-416; it reads TFFATSNSEPPR. A helical membrane pass occupies residues 417 to 437; the sequence is LHWLFAFLGFLTSALWINAAA. Over 438–445 the chain is Cytoplasmic; it reads TEVVNILR. The chain crosses the membrane as a helical span at residues 446 to 466; that stretch reads SLGVVFRLSNTVLGLTLLAWG. Topologically, residues 467-491 are extracellular; the sequence is NSIGDAFSDFTLARQGYPRMAFSAC. The chain crosses the membrane as a helical span at residues 492 to 512; it reads FGGIIFNILVGVGLGCLLQIV. At 513-525 the chain is on the cytoplasmic side; it reads RSHASEVKLEPDG. Residues 526-546 form a helical membrane-spanning segment; the sequence is LLVWVLASALGLSLVFSLVSV. The Extracellular segment spans residues 547 to 559; that stretch reads PLQCFQLSKAYGL. Residues 560 to 580 traverse the membrane as a helical segment; the sequence is CLLLFYICFIVVVLLTEFGVI. The Cytoplasmic segment spans residues 581-585; that stretch reads HLKAD.

The protein belongs to the Ca(2+):cation antiporter (CaCA) (TC 2.A.19) family. SLC24A subfamily. Post-translationally, phosphorylation at Ser-258 by PKA prevents calcium overload. As to expression, widely expressed. Present at higher level in pancreas, stomach, skeletal muscle and skin (at protein level). Ubiquitously expressed.

The protein localises to the mitochondrion inner membrane. The catalysed reaction is Ca(2+)(in) + 3 Na(+)(out) = Ca(2+)(out) + 3 Na(+)(in). It carries out the reaction 3 Li(+)(out) + Ca(2+)(in) = 3 Li(+)(in) + Ca(2+)(out). Inhibited by the sodium/calcium exchanger inhibitor CGP-37157. Strongly inhibited by zinc. In terms of biological role, mitochondrial sodium/calcium antiporter that mediates sodium-dependent calcium efflux from mitochondrion, by mediating the exchange of 3 sodium ions per 1 calcium ion. Plays a central role in mitochondrial calcium homeostasis by mediating mitochondrial calcium extrusion: calcium efflux is essential for mitochondrial function and cell survival, notably in cardiomyocytes. Regulates rates of glucose-dependent insulin secretion in pancreatic beta-cells during the first phase of insulin secretion: acts by mediating efflux of calcium from mitochondrion, thereby affecting cytoplasmic calcium responses. Required for store-operated Ca(2+) entry (SOCE) and Ca(2+) release-activated Ca(2+) (CRAC) channel regulation: sodium transport by SLC8B1 leads to promote calcium-shuttling that modulates mitochondrial redox status, thereby regulating SOCE activity. Involved in B-lymphocyte chemotaxis. Able to transport Ca(2+) in exchange of either Li(+) or Na(+), explaining how Li(+) catalyzes Ca(2+) exchange. In contrast to other members of the family its function is independent of K(+). The chain is Mitochondrial sodium/calcium exchanger protein from Rattus norvegicus (Rat).